The chain runs to 60 residues: Single-pass membrane and coiled-coil domain-containing protein 4 homolog (60 aa).

The tract at residues 1–21 (MRKLRGGQTKETRKQKQERRE) is disordered. Residues 8–21 (QTKETRKQKQERRE) show a composition bias toward basic and acidic residues. The stretch at 10-33 (KETRKQKQERREENLKIQQQLKTI) forms a coiled coil. The chain crosses the membrane as a helical span at residues 32-52 (TIVLPICGVFLMCIVVYVFLK).

The protein belongs to the SMCO4 family.

The protein resides in the membrane. The sequence is that of Single-pass membrane and coiled-coil domain-containing protein 4 homolog from Aedes aegypti (Yellowfever mosquito).